Reading from the N-terminus, the 582-residue chain is External alternative NAD(P)H-ubiquinone oxidoreductase B2, mitochondrial (582 aa).

A mitochondrion-targeting transit peptide spans 1–38; that stretch reads MRNFSVFERFSKAFKDHPSLTRILVVSTISGGGLIAYS. Position 60 to 90 (60 to 90) interacts with FAD; it reads KVVLLGTGWAGTSFLKNLNNSQYEVQIISPR. 223-259 serves as a coordination point for NAD(+); that stretch reads LHFVVVGGGPTGVEFAAELHDFVTEDLVSLYPRAKGS. Positions 379–414 constitute an EF-hand domain; the sequence is KVMEDVSAIFSKADKDKSGTLTLKEFQEAMDDICVR. Ca(2+)-binding residues include Asp-392, Asp-394, Ser-396, Thr-398, and Glu-403. Positions 573-582 match the Microbody targeting signal motif; the sequence is FIFGRDSSSI.

It belongs to the NADH dehydrogenase family. Requires FAD as cofactor. In terms of tissue distribution, mostly expressed in seedlings and roots and, to a lower extent, in cotyledons, leaves, stems, buds and flowers.

The protein localises to the mitochondrion inner membrane. It localises to the peroxisome. It catalyses the reaction a quinone + NADH + H(+) = a quinol + NAD(+). It carries out the reaction a ubiquinone + NADH + H(+) = a ubiquinol + NAD(+). With respect to regulation, NADPH oxidase activity is stimulated by calcium ions. Alternative NADH-ubiquinone oxidoreductase which catalyzes the oxidation of mitochondrial NADH does not translocate protons across the inner mitochondrial membrane. Calcium-dependent NAD(P)H dehydrogenase; more efficient on NADH. Binds calcium ions. The sequence is that of External alternative NAD(P)H-ubiquinone oxidoreductase B2, mitochondrial (NDB2) from Arabidopsis thaliana (Mouse-ear cress).